We begin with the raw amino-acid sequence, 350 residues long: Heat-inducible transcription repressor HrcA (350 aa).

This sequence belongs to the HrcA family.

Functionally, negative regulator of class I heat shock genes (grpE-dnaK-dnaJ and groELS operons). Prevents heat-shock induction of these operons. This is Heat-inducible transcription repressor HrcA from Xanthomonas euvesicatoria pv. vesicatoria (strain 85-10) (Xanthomonas campestris pv. vesicatoria).